The following is a 519-amino-acid chain: Pleckstrin homology domain-containing family A member 8 (519 aa).

The PH domain occupies 1–93; it reads MEGVLYKWTN…WLVALGSAKA (93 aa). Position 139 is a phosphothreonine (Thr-139). Ser-145 is modified (phosphoserine). Thr-153 is modified (phosphothreonine). The tract at residues 274–302 is disordered; it reads GEDNLGNHDSSLAQPASDSSSSPPESHWE. The span at 282-298 shows a compositional bias: low complexity; sequence DSSLAQPASDSSSSPPE. The tract at residues 310–519 is glycolipid transfer protein homology domain; the sequence is TFFSTMNTSF…VHGLESDEVV (210 aa).

In terms of assembly, homodimer. Interacts with ARF1; the interaction together with phosphatidylinositol 4-phosphate binding is required for FAPP2 GlcCer transfer ability.

It is found in the golgi apparatus. Its subcellular location is the trans-Golgi network membrane. It localises to the membrane. Its function is as follows. Cargo transport protein that is required for apical transport from the trans-Golgi network (TGN). Transports AQP2 from the trans-Golgi network (TGN) to sites of AQP2 phosphorylation. Mediates the non-vesicular transport of glucosylceramide (GlcCer) from the trans-Golgi network (TGN) to the plasma membrane and plays a pivotal role in the synthesis of complex glycosphingolipids. Binding of both phosphatidylinositol 4-phosphate (PIP) and ARF1 are essential for the GlcCer transfer ability. Also required for primary cilium formation, possibly by being involved in the transport of raft lipids to the apical membrane, and for membrane tubulation. This is Pleckstrin homology domain-containing family A member 8 (PLEKHA8) from Canis lupus familiaris (Dog).